We begin with the raw amino-acid sequence, 380 residues long: Probable protein phosphatase 2C 2 (380 aa).

The PPM-type phosphatase domain occupies Arg-69–Phe-339. Residues Asp-113, Gly-114, Asp-287, and Asp-330 each contribute to the Mn(2+) site.

The protein belongs to the PP2C family. Mg(2+) is required as a cofactor. Requires Mn(2+) as cofactor.

It carries out the reaction O-phospho-L-seryl-[protein] + H2O = L-seryl-[protein] + phosphate. The catalysed reaction is O-phospho-L-threonyl-[protein] + H2O = L-threonyl-[protein] + phosphate. The protein is Probable protein phosphatase 2C 2 of Oryza sativa subsp. japonica (Rice).